The primary structure comprises 86 residues: Exodeoxyribonuclease 7 small subunit (86 aa).

Positions 1-26 (MQDELFETEKAPQKNAKNAKNAPKKS) are disordered.

The protein belongs to the XseB family. In terms of assembly, heterooligomer composed of large and small subunits.

Its subcellular location is the cytoplasm. It catalyses the reaction Exonucleolytic cleavage in either 5'- to 3'- or 3'- to 5'-direction to yield nucleoside 5'-phosphates.. Functionally, bidirectionally degrades single-stranded DNA into large acid-insoluble oligonucleotides, which are then degraded further into small acid-soluble oligonucleotides. The chain is Exodeoxyribonuclease 7 small subunit from Helicobacter pylori (strain J99 / ATCC 700824) (Campylobacter pylori J99).